A 193-amino-acid chain; its full sequence is Annexin-2 receptor (193 aa).

A compositionally biased stretch (polar residues) spans Q78 to K87. The tract at residues Q78 to E111 is disordered.

In terms of tissue distribution, widely expressed. Highly expressed in lymphocytes. Expressed in both resting CD4(+) and CD8(+) T-cells.

Its function is as follows. May act as a receptor for annexin II on marrow stromal cells to induce osteoclast formation. The protein is Annexin-2 receptor (ANXA2R) of Homo sapiens (Human).